Here is an 81-residue protein sequence, read N- to C-terminus: Photosystem I iron-sulfur center (81 aa).

4Fe-4S ferredoxin-type domains follow at residues 2 to 31 and 39 to 68; these read SHAV…MVPW and IAAS…IRVY. [4Fe-4S] cluster contacts are provided by Cys11, Cys14, Cys17, Cys21, Cys48, Cys51, Cys54, and Cys58.

The cyanobacterial PSI reaction center is composed of one copy each of PsaA,B,C,D,E,F,I,J,K,L,M and X, and forms trimeric complexes. Requires [4Fe-4S] cluster as cofactor.

It is found in the cellular thylakoid membrane. It carries out the reaction reduced [plastocyanin] + hnu + oxidized [2Fe-2S]-[ferredoxin] = oxidized [plastocyanin] + reduced [2Fe-2S]-[ferredoxin]. Apoprotein for the two 4Fe-4S centers FA and FB of photosystem I (PSI); essential for photochemical activity. FB is the terminal electron acceptor of PSI, donating electrons to ferredoxin. The C-terminus interacts with PsaA/B/D and helps assemble the protein into the PSI complex. Required for binding of PsaD and PsaE to PSI. PSI is a plastocyanin/cytochrome c6-ferredoxin oxidoreductase, converting photonic excitation into a charge separation, which transfers an electron from the donor P700 chlorophyll pair to the spectroscopically characterized acceptors A0, A1, FX, FA and FB in turn. The polypeptide is Photosystem I iron-sulfur center (Prochlorococcus marinus (strain MIT 9313)).